We begin with the raw amino-acid sequence, 81 residues long: Small ribosomal subunit protein bS16 (81 aa).

This sequence belongs to the bacterial ribosomal protein bS16 family.

This chain is Small ribosomal subunit protein bS16, found in Coprothermobacter proteolyticus (strain ATCC 35245 / DSM 5265 / OCM 4 / BT).